The following is a 200-amino-acid chain: ASI1-immunoprecipitated protein 1 (200 aa).

The region spanning 18 to 101 is the RRM domain; the sequence is RTVYVDELTP…RPVRACAAEP (84 aa).

As to quaternary structure, component of the ASI1-AIPP1-EDM2 (AAE) RNA regulatory complex composed of at least AIPP1/EDM3, ASI1 and EDM2 and may contain CPL2, AIPP2 and AIPP3/BDT1. Binds directly to ASI1 and EDM2 and may function as a bridge protein between them. Co-associates with EDM2 to histone H3 lysine 9 dimethylation (H3K9me2)-marked chromatin and transcripts at a critical proximal polyadenylation site of RPP7 to hamper proximal transcript polyadeylation/termination.

The protein localises to the nucleus. Prevents gene silencing by suppressing CHG methylation as well as histone H3 lysine 9 dimethylation (H3K9me2) status at target loci. Collaboratively with ASI1 and EDM2, the AAE complex regulates alternative RNA processing (e.g. alternative splicing) and epigenetic silencing (e.g. H3K9me2) of intronic heterochromatin-containing genes as well as genic heterochromatin-containing genes by promoting distal 3' polyadenylation, thus being required for the accumulation of their full-length transcripts. May also modulate transposable elements (TE) expression. Mediates RPP7-dependent race-specific disease resistance by promoting histone H3 lysine 9 dimethylation (H3K9me2) at the proximal RPP7 polyadenylation site, thus controlling alternative polyadenylation of RPP7 immune receptor transcripts and facilitating 2-phosphoserine RNAPII occupancy. In cv. Columbia, required for RPP7-dependent disease resistance against the Hyaloperonospora arabidopsidis isolate Hiks1. The chain is ASI1-immunoprecipitated protein 1 from Arabidopsis thaliana (Mouse-ear cress).